The following is a 420-amino-acid chain: Glycogen synthase kinase-3 beta (420 aa).

The span at 1–24 (MSGRPRTTSFAESCKPVQQPSSFG) shows a compositional bias: polar residues. Positions 1–50 (MSGRPRTTSFAESCKPVQQPSSFGSMKVSRDKDGSKVTTVVATPGQGPDR) are disordered. The 285-residue stretch at 56 to 340 (YTDTKVIGNG…PLDACAHSFF (285 aa)) folds into the Protein kinase domain. ATP is bound by residues 62 to 70 (IGNGSFGVV) and lysine 85. Aspartate 181 functions as the Proton acceptor in the catalytic mechanism. The tract at residues 384-420 (NQAAVSTTSNTTSTSDSNTGERGSTNNAASASASNSS) is disordered. 2 stretches are compositionally biased toward low complexity: residues 389-401 (STTS…SDSN) and 409-420 (NNAASASASNSS).

This sequence belongs to the protein kinase superfamily. CMGC Ser/Thr protein kinase family. GSK-3 subfamily. Post-translationally, phosphorylated. Activated by phosphorylation at Tyr-216.

It localises to the cytoplasm. It is found in the nucleus. The protein resides in the cell membrane. The catalysed reaction is L-seryl-[tau protein] + ATP = O-phospho-L-seryl-[tau protein] + ADP + H(+). It carries out the reaction L-threonyl-[tau protein] + ATP = O-phospho-L-threonyl-[tau protein] + ADP + H(+). Functionally, plays a role in the organization of the formation of the main body axis of developing embryo. Acts as an inhibitor of differentiation of primary neurons. Inhibits the ability of ectopically expressed NEUROD1 and other bHLH factors to promote early retinal cell differentiation. May participate in the Wnt signaling pathway. May regulate the circadian clock via phosphorylation of the major clock components. The polypeptide is Glycogen synthase kinase-3 beta (gsk3b) (Xenopus laevis (African clawed frog)).